We begin with the raw amino-acid sequence, 437 residues long: Ribosomal protein uS12 methylthiotransferase RimO (437 aa).

The 112-residue stretch at 5 to 116 (PTIAISHLGC…IVEIVERVET (112 aa)) folds into the MTTase N-terminal domain. [4Fe-4S] cluster-binding residues include Cys14, Cys50, Cys79, Cys154, Cys158, and Cys161. Residues 140-369 (TTSEGVAYLR…MLTQQPISER (230 aa)) enclose the Radical SAM core domain. A TRAM domain is found at 372–437 (QAYIGQTVDV…DTYDLYGEIV (66 aa)).

It belongs to the methylthiotransferase family. RimO subfamily. The cofactor is [4Fe-4S] cluster.

It is found in the cytoplasm. The catalysed reaction is L-aspartate(89)-[ribosomal protein uS12]-hydrogen + (sulfur carrier)-SH + AH2 + 2 S-adenosyl-L-methionine = 3-methylsulfanyl-L-aspartate(89)-[ribosomal protein uS12]-hydrogen + (sulfur carrier)-H + 5'-deoxyadenosine + L-methionine + A + S-adenosyl-L-homocysteine + 2 H(+). Its function is as follows. Catalyzes the methylthiolation of an aspartic acid residue of ribosomal protein uS12. This is Ribosomal protein uS12 methylthiotransferase RimO from Microcystis aeruginosa (strain NIES-843 / IAM M-2473).